A 749-amino-acid polypeptide reads, in one-letter code: Fibronectin type III and SPRY domain-containing protein 2 (749 aa).

Residues 205–317 (LNEALESAKD…TIEEMCHEEK (113 aa)) are a coiled coil. Fibronectin type-III domains follow at residues 375 to 470 (PVIN…TAPS) and 471 to 564 (PPII…TIGS). The region spanning 546-744 (NMGGPSVRSE…KVHNGISMPK (199 aa)) is the B30.2/SPRY domain.

In terms of assembly, interacts with CMYA5. In cardiac muscles, identified in a complex composed of FSD2, CMYA5 and RYR2.

Its subcellular location is the nucleus. The protein localises to the sarcoplasmic reticulum. It localises to the cytoplasm. It is found in the perinuclear region. The sequence is that of Fibronectin type III and SPRY domain-containing protein 2 (FSD2) from Homo sapiens (Human).